The sequence spans 558 residues: Urocanate hydratase (558 aa).

NAD(+) contacts are provided by residues Gly53–Gly54, Gln131, Gly177–Gly179, Glu197, Arg202, Asn243–Ala244, Gln264–His268, Tyr274–Leu275, and Tyr323. Cys411 is a catalytic residue. Gly493 provides a ligand contact to NAD(+).

The protein belongs to the urocanase family. The cofactor is NAD(+).

The protein localises to the cytoplasm. The enzyme catalyses 4-imidazolone-5-propanoate = trans-urocanate + H2O. It participates in amino-acid degradation; L-histidine degradation into L-glutamate; N-formimidoyl-L-glutamate from L-histidine: step 2/3. Catalyzes the conversion of urocanate to 4-imidazolone-5-propionate. This chain is Urocanate hydratase, found in Idiomarina loihiensis (strain ATCC BAA-735 / DSM 15497 / L2-TR).